A 33-amino-acid chain; its full sequence is Mu-theraphotoxin-Os1a (33 aa).

Cystine bridges form between cysteine 2-cysteine 17, cysteine 9-cysteine 22, and cysteine 16-cysteine 29. Leucine 33 is modified (leucine amide).

The protein belongs to the neurotoxin 10 (Hwtx-1) family. 14 (Hntx-1) subfamily. In terms of assembly, monomer. Expressed by the venom gland.

It is found in the secreted. Potently and reversibly inhibits some human voltage-gated sodium channels (Nav1.1/SCN1A (IC(50)=72.0 nM), Nav1.2/SCN2A (IC(50)=75.5 nM), Nav1.6/SCN8A (IC(50)=115.0 nM), Nav1.7/SCN9A (IC(50)=52.7-129.5 nM), Nav1.3/SCN3A (IC(50)=306.6 nM)). The hNav1.7/SCN9A channel inhibition occurs without any change in steady-state inactivation- and conductance-voltage relationships. On adult mouse DRG neurons, this toxin is approximately 1000-fold more efficient to inhibit tetrodotoxin (TTX)-sensitive than TTX-resistant sodium currents. In vivo, this toxin exhibits analgesic effects in mice pain models. The protein is Mu-theraphotoxin-Os1a of Omothymus schioedtei (Malaysian earth tiger tarantula).